Here is a 287-residue protein sequence, read N- to C-terminus: MLHTAAPIDRVAIEIGPLSIYWYGIIIAFGAILAIYLASKEADRLGLTKDLMLDFVMFAVPIAIIFARIYYVFFEFDQYANGPWWKVFAIWEGGIAIHGAVIGGVITAIVFAKVRKVSFWQIADIVAPSLILGQAIGRWGNFVNQEAHGGPISQATYESFHQYLPDFIMNQMTINGVMYHPTFLYESVWNILIFVGLLLLRKYNPVRGEVFLTYAITYSIGRYFIEGLRTDSLYMFDIIRTAQFISILIIIVSIIFIIYRRKTVSERYLDAPPSNKKKNKKSTKKKK.

4 helical membrane passes run 15–35 (IGPLSIYWYGIIIAFGAILAI), 55–75 (FVMFAVPIAIIFARIYYVFFE), 90–110 (IWEGGIAIHGAVIGGVITAIV), and 117–137 (VSFWQIADIVAPSLILGQAIG). R138 contacts a 1,2-diacyl-sn-glycero-3-phospho-(1'-sn-glycerol). 2 consecutive transmembrane segments (helical) span residues 180–200 (HPTFLYESVWNILIFVGLLLL) and 238–258 (IIRTAQFISILIIIVSIIFII).

Belongs to the Lgt family.

It is found in the cell membrane. The catalysed reaction is L-cysteinyl-[prolipoprotein] + a 1,2-diacyl-sn-glycero-3-phospho-(1'-sn-glycerol) = an S-1,2-diacyl-sn-glyceryl-L-cysteinyl-[prolipoprotein] + sn-glycerol 1-phosphate + H(+). It functions in the pathway protein modification; lipoprotein biosynthesis (diacylglyceryl transfer). Catalyzes the transfer of the diacylglyceryl group from phosphatidylglycerol to the sulfhydryl group of the N-terminal cysteine of a prolipoprotein, the first step in the formation of mature lipoproteins. This is Phosphatidylglycerol--prolipoprotein diacylglyceryl transferase from Oceanobacillus iheyensis (strain DSM 14371 / CIP 107618 / JCM 11309 / KCTC 3954 / HTE831).